Consider the following 335-residue polypeptide: Large ribosomal subunit protein uL3 (335 aa).

This sequence belongs to the universal ribosomal protein uL3 family. As to quaternary structure, part of the 50S ribosomal subunit. Forms a cluster with proteins L14 and L24e.

In terms of biological role, one of the primary rRNA binding proteins, it binds directly near the 3'-end of the 23S rRNA, where it nucleates assembly of the 50S subunit. The protein is Large ribosomal subunit protein uL3 of Methanocaldococcus jannaschii (strain ATCC 43067 / DSM 2661 / JAL-1 / JCM 10045 / NBRC 100440) (Methanococcus jannaschii).